The primary structure comprises 555 residues: MAVRSTAAPPTPWSRSLAEAQIHESAFVHPFSNIIGDVHIGANVIIAPGTSIRADEGTPFHIGENTNIQDGVVIHGLEQGRVVGDDNKEYSVWVGSSASLTHMALIHGPAYVGDNSFIGFRSTVFNAKVGAGCIVMMHALIKDVEVPPGKYVPSGAIITNQKQADRLPDVQPQDRDFAHHVIGINQALRAGYLCAADSKCIAPLRNDQVKSYTSTTVIGLERSSEVASNSLGAETIEQVRYLLEQGYKIGSEHVDQRRFRTGSWTSCQPIEARSVGDALAALEACLADHSGEYVRLFGIDPKGKRRVLETIIQRPDGVVAGSTSFKAPASNTNGNGSYHSNGNGNGYSNGATSGKVSAETVDQIRQLLAGGYKIGTEHVDERRFRTGSWNSCKPIEATSAGEVVAALEECIDSHQGEYIRLIGIDPKAKRRVLESIIQRPNGQVAPSSSPRTVVSASSASSGTATATATRLSTEVVDQVRQILGGGYKLSIEHVDQRRFRTGSWSSTGAISATSEREAIAVIEASLSEFAGEYVRLIGIDPKAKRRVLETIIQRP.

The interval 1–209 (MAVRSTAAPP…CIAPLRNDQV (209 aa)) is has carbonic anhydrase (CA) activity. The Proton donor/acceptor role is filled by Glu56. Zn(2+)-binding residues include His75, His102, and His107. Residues Cys194 and Cys200 are joined by a disulfide bond. Residues 223–315 (SSEVASNSLG…RVLETIIQRP (93 aa)) form a rbcS-like repeat 1, SSUL1 region. 2 disordered regions span residues 323 to 351 (TSFK…SNGA) and 441 to 464 (NGQV…SGTA). Low complexity-rich tracts occupy residues 330-351 (SNTN…SNGA) and 445-464 (APSS…SGTA). A rbcS-like repeat 2, SSUL2 region spans residues 347–440 (YSNGATSGKV…RVLESIIQRP (94 aa)). A rbcS-like repeat 3, SSUL3 region spans residues 460–555 (SSGTATATAT…RVLETIIQRP (96 aa)).

Belongs to the gamma-class carbonic anhydrase family. As to quaternary structure, probable homotrimer; zinc is bound between adjacent monomers. Full length protein (M58) interacts with CcmN. The C-terminal RbcS-like domains (SSUL) bind to holo-RuBisCO, as does the M35 short form. The cofactor is Zn(2+). In terms of processing, the first amino acid of the short form (equivalent to Val-226) is not seen in Edman degradation, while Ser-230 may be post-translationally modified. Migrates in gels as 2 about equal forms of about 60 and 35 kDa (called M58 and M35). They are probably the result of alternative translation initiation.

The protein resides in the carboxysome. It is found in the cytoplasm. The enzyme catalyses hydrogencarbonate + H(+) = CO2 + H2O. Its activity is regulated as follows. Carbonic anhydrase (CA) activity is probably under redox control to remain inactive in the cytoplasm. Carbonic anhydrase (CA) activity of full-length protein and N-terminal fragment is inhibited by ethoxyzolamide. N-terminal fragment CA activity is activated under oxidizing conditions and inhibited under reducing conditions. In terms of biological role, functions as a scaffold protein for the assembly of beta-carboxysomes, initiates carboxysome assembly by coalescing RuBisCO (ribulose bisphosphate carboxylase, rbcL-rbcS). Produced as a full-length (M58) and a short form (M35), possibly by alternative translation initiation; probably both forms are required for correct carboxysome assembly and growth. In this strain both forms are equally abundant. Functionally, a moderately active carbonic anhydrase that catalyzes the reversible hydration of carbon dioxide. Essential to photosynthetic carbon dioxide fixation, supplies CO(2) to ribulose bisphosphate carboxylase (RuBisCO) in the carboxysome. Also hydrolyzes COS. Beta-carboxysome assembly initiates when soluble RuBisCO is condensed into a liquid matrix in a pre-carboxysome by the RbcS-like domains of probably both forms of CcmM. CcmN interacts with the N-terminus of full length CcmM, and then recruits the shell proteins (CcmK) via CcmN's encapsulation peptide. Shell formation requires both CcmK proteins and CcmO. CcmL caps the otherwise elongated carboxysome. Once fully encapsulated carboxysomes are formed, they migrate within the cell probably via interactions with the cytoskeleton. The chain is Carboxysome assembly protein CcmM from Nostoc sp. (strain PCC 7120 / SAG 25.82 / UTEX 2576).